A 164-amino-acid polypeptide reads, in one-letter code: SsrA-binding protein (164 aa).

Belongs to the SmpB family.

It localises to the cytoplasm. In terms of biological role, required for rescue of stalled ribosomes mediated by trans-translation. Binds to transfer-messenger RNA (tmRNA), required for stable association of tmRNA with ribosomes. tmRNA and SmpB together mimic tRNA shape, replacing the anticodon stem-loop with SmpB. tmRNA is encoded by the ssrA gene; the 2 termini fold to resemble tRNA(Ala) and it encodes a 'tag peptide', a short internal open reading frame. During trans-translation Ala-aminoacylated tmRNA acts like a tRNA, entering the A-site of stalled ribosomes, displacing the stalled mRNA. The ribosome then switches to translate the ORF on the tmRNA; the nascent peptide is terminated with the 'tag peptide' encoded by the tmRNA and targeted for degradation. The ribosome is freed to recommence translation, which seems to be the essential function of trans-translation. The chain is SsrA-binding protein from Corynebacterium efficiens (strain DSM 44549 / YS-314 / AJ 12310 / JCM 11189 / NBRC 100395).